The following is a 158-amino-acid chain: F(420)H(2) dehydrogenase subunit C (158 aa).

It belongs to the complex I 30 kDa subunit family. In terms of assembly, the FPO complex is composed of at least 13 different subunits.

Its subcellular location is the cell membrane. It carries out the reaction methanophenazine + reduced coenzyme F420-(gamma-L-Glu)(n) = dihydromethanophenazine + oxidized coenzyme F420-(gamma-L-Glu)(n) + H(+). Functionally, component of the F(420)H(2) dehydrogenase (FPO complex) which is part of the energy-conserving F(420)H(2):heterodisulfide oxidoreductase system. The membrane-bound electron transfer system of the complex plays an important role in the metabolism of methylotrophic methanogens when the organisms grow on methanol or methylamines. Catalyzes the oxidation of methanophenazine to dihydromethanophenazine. It shuttles electrons from F(420)H(2), via FAD and iron-sulfur (Fe-S) centers, to methanophenazine (an electron carrier in the membrane). It couples the redox reaction to proton translocation (for every two electrons transferred, two hydrogen ions are translocated across the cytoplasmic membrane), and thus conserves the redox energy in a proton gradient. It also catalyzes the oxidation of F(420)H(2) with quinones such as 2,3-dimethyl-1,4-naphthoquinone, 2-methyl-1,4-naphthoquinone and tetramethyl-p-benzoquinone. This is F(420)H(2) dehydrogenase subunit C (fpoC) from Methanosarcina mazei (strain ATCC BAA-159 / DSM 3647 / Goe1 / Go1 / JCM 11833 / OCM 88) (Methanosarcina frisia).